A 282-amino-acid chain; its full sequence is Bifunctional protein FolD (282 aa).

NADP(+) is bound at residue 163-165; it reads GRS.

The protein belongs to the tetrahydrofolate dehydrogenase/cyclohydrolase family. As to quaternary structure, homodimer.

The enzyme catalyses (6R)-5,10-methylene-5,6,7,8-tetrahydrofolate + NADP(+) = (6R)-5,10-methenyltetrahydrofolate + NADPH. It catalyses the reaction (6R)-5,10-methenyltetrahydrofolate + H2O = (6R)-10-formyltetrahydrofolate + H(+). The protein operates within one-carbon metabolism; tetrahydrofolate interconversion. In terms of biological role, catalyzes the oxidation of 5,10-methylenetetrahydrofolate to 5,10-methenyltetrahydrofolate and then the hydrolysis of 5,10-methenyltetrahydrofolate to 10-formyltetrahydrofolate. This chain is Bifunctional protein FolD, found in Leuconostoc citreum (strain KM20).